A 496-amino-acid chain; its full sequence is UDP-N-acetylmuramoyl-L-alanyl-D-glutamate--2,6-diaminopimelate ligase (496 aa).

Ser-32 contacts UDP-N-acetyl-alpha-D-muramoyl-L-alanyl-D-glutamate. 116 to 122 (GTNGKTT) contacts ATP. Residues 158–159 (TT), Ser-185, Gln-191, and Arg-193 contribute to the UDP-N-acetyl-alpha-D-muramoyl-L-alanyl-D-glutamate site. The residue at position 225 (Lys-225) is an N6-carboxylysine. Meso-2,6-diaminopimelate is bound by residues Arg-389, 413–416 (DNPR), Gly-464, and Glu-468. Residues 413-416 (DNPR) carry the Meso-diaminopimelate recognition motif motif.

This sequence belongs to the MurCDEF family. MurE subfamily. Mg(2+) serves as cofactor. In terms of processing, carboxylation is probably crucial for Mg(2+) binding and, consequently, for the gamma-phosphate positioning of ATP.

Its subcellular location is the cytoplasm. The catalysed reaction is UDP-N-acetyl-alpha-D-muramoyl-L-alanyl-D-glutamate + meso-2,6-diaminopimelate + ATP = UDP-N-acetyl-alpha-D-muramoyl-L-alanyl-gamma-D-glutamyl-meso-2,6-diaminopimelate + ADP + phosphate + H(+). It participates in cell wall biogenesis; peptidoglycan biosynthesis. Functionally, catalyzes the addition of meso-diaminopimelic acid to the nucleotide precursor UDP-N-acetylmuramoyl-L-alanyl-D-glutamate (UMAG) in the biosynthesis of bacterial cell-wall peptidoglycan. The chain is UDP-N-acetylmuramoyl-L-alanyl-D-glutamate--2,6-diaminopimelate ligase from Nostoc sp. (strain PCC 7120 / SAG 25.82 / UTEX 2576).